A 537-amino-acid chain; its full sequence is Fusion glycoprotein F0 (537 aa).

Positions 1–21 (MIPGRIFLVLLVIFNTKPIHP) are cleaved as a signal peptide. Over 26–486 (EKYYESTCSV…DLSENRENKN (461 aa)) the chain is Extracellular. Intrachain disulfides connect Cys33-Cys402, Cys65-Cys177, Cys278-Cys306, Cys287-Cys296, Cys321-Cys330, Cys345-Cys356, and Cys379-Cys385. The segment at 102–122 (FLGLILGLGAAVTAGVALAKT) is fusion peptide. The stretch at 120–174 (AKTVQLESEIALIRDAVRNTNEAVVSLTNGMSVLAKVVDDLKNFISKELLPKINR) forms a coiled coil. Residues 444–479 (LSFPDDKFDVAIRDVEHSINQTRTFFKASDQLLDLS) adopt a coiled-coil conformation. The N-linked (GlcNAc...) asparagine; by host glycan is linked to Asn463. A helical transmembrane segment spans residues 487–515 (LNKSYILTTLLFVVMLIIIMAVIGFILYK). Residues 516-537 (VLKMIRDNKLKSKSTPGLTVLS) are Cytoplasmic-facing.

This sequence belongs to the paramyxoviruses fusion glycoprotein family. In terms of assembly, homotrimer. Heterodimer with fusion protein F2; disulfide-linked. Part of a complex composed of F1, F2 and G glycoproteins. As to quaternary structure, homotrimer. Heterodimer with fusion protein F1; disulfide-linked. Part of a complex composed of F1, F2 and G glycoproteins. The F glycoprotein is synthesized as a F0 inactive precursor that is heavily N-glycosylated and processed by a host furin-like protease probably in the Golgi.

It localises to the host Golgi apparatus membrane. Its subcellular location is the virion membrane. The protein localises to the host cell membrane. Its function is as follows. Inactive precursor that is cleaved by a furin-like protease to give rise to the mature F1 and F2 fusion glycoproteins. Functionally, class I viral fusion protein. Under the current model, the protein has at least 3 conformational states: pre-fusion native state, pre-hairpin intermediate state, and post-fusion hairpin state. During viral and plasma cell membrane fusion, the coiled coil regions assume a trimer-of-hairpins structure, positioning the fusion peptide in close proximity to the C-terminal region of the ectodomain. The formation of this structure appears to drive apposition and subsequent fusion of viral and cellular membranes leading to delivery of the nucleocapsid into the cytoplasm. This fusion is pH independent and occurs at the plasma or endosomal membrane. The trimer of F1-F2 (F protein) also facilitates the attachment and entry into the host cell. Later in infection, F protein expressed at the plasma membrane of infected cells can mediate fusion with adjacent cells to form syncytia, a cytopathic effect that could lead to tissue necrosis. Major determinant of the species specificity of RSV infection. The trimer of F1-F2 (F protein) also facilitates the attachment and entry into the host cell. Later in infection, F protein expressed at the plasma membrane of infected cells can mediate fusion with adjacent cells to form syncytia, a cytopathic effect that could lead to tissue necrosis. The protein is Fusion glycoprotein F0 (F) of Mus musculus (Mouse).